Here is a 395-residue protein sequence, read N- to C-terminus: Protein UNIFOLIATA (395 aa).

Disordered regions lie at residues 147-170 and 185-223; these read SQEGLSEEPVVQREKEAMGSGGGS and QIRRRRMKMKGNDHGENEEGEEEEEDNISGGGVGGGERQ. The span at 202–211 shows a compositional bias: acidic residues; it reads EEGEEEEEDN. 3 DNA-binding regions span residues 224–228, 293–300, and 364–367; these read REHPF, NKPKMRHY, and YGPT.

This sequence belongs to the FLO/LFY family. As to expression, highly expressed in leaf, leaflet, inflorescence and lateral shoot primordia on the main shoot axis, and in floral organ and carpel primordia.

It localises to the nucleus. Functionally, may regulate indeterminacy during leaf and flower development. In Pisum sativum (Garden pea), this protein is Protein UNIFOLIATA (UNI).